The sequence spans 496 residues: uncharacterized protein (496 aa).

The first 19 residues, 1-19 (MTTGYILIAAILILGGVIA), serve as a signal peptide directing secretion. A helical transmembrane segment spans residues 45 to 67 (AVLVTILTGGLVSATTLAILFIA). The disordered stretch occupies residues 113 to 137 (LETTRTDKKQVETQRDQAKKEKLKA).

The protein resides in the membrane. This is an uncharacterized protein from Nostoc sp. (strain PCC 7120 / SAG 25.82 / UTEX 2576).